We begin with the raw amino-acid sequence, 480 residues long: NADH-quinone oxidoreductase subunit N (480 aa).

13 helical membrane-spanning segments follow: residues 11-31, 38-58, 74-94, 109-129, 163-183, 200-220, 239-259, 273-293, 301-321, 329-349, 372-392, 405-425, and 451-471; these read VIPE…DLFV, ITYG…IALA, GLSD…FLYS, YVLG…YSFL, FILG…LYGI, GAGL…GLAF, PTSV…AIIM, WQGM…VVAI, MLAY…LAGT, LFYT…IILL, FAFI…TVGF, VEMI…AFYY, and VVLS…GLLM.

Belongs to the complex I subunit 2 family. In terms of assembly, NDH-1 is composed of 14 different subunits. Subunits NuoA, H, J, K, L, M, N constitute the membrane sector of the complex.

It localises to the cell inner membrane. It carries out the reaction a quinone + NADH + 5 H(+)(in) = a quinol + NAD(+) + 4 H(+)(out). NDH-1 shuttles electrons from NADH, via FMN and iron-sulfur (Fe-S) centers, to quinones in the respiratory chain. The immediate electron acceptor for the enzyme in this species is believed to be ubiquinone. Couples the redox reaction to proton translocation (for every two electrons transferred, four hydrogen ions are translocated across the cytoplasmic membrane), and thus conserves the redox energy in a proton gradient. This is NADH-quinone oxidoreductase subunit N from Thioalkalivibrio sulfidiphilus (strain HL-EbGR7).